The sequence spans 352 residues: Adenosine deaminase (352 aa).

Positions 24 and 26 each coordinate Zn(2+). Substrate is bound by residues H26, D28, and G181. H208 provides a ligand contact to Zn(2+). E211 functions as the Proton donor in the catalytic mechanism. Position 290 (D290) interacts with Zn(2+).

Belongs to the metallo-dependent hydrolases superfamily. Adenosine and AMP deaminases family. Adenosine deaminase subfamily. The cofactor is Zn(2+).

It carries out the reaction adenosine + H2O + H(+) = inosine + NH4(+). The enzyme catalyses 2'-deoxyadenosine + H2O + H(+) = 2'-deoxyinosine + NH4(+). In terms of biological role, catalyzes the hydrolytic deamination of adenosine and 2-deoxyadenosine. The chain is Adenosine deaminase from Lactococcus lactis subsp. lactis (strain IL1403) (Streptococcus lactis).